Consider the following 536-residue polypeptide: Phosphoenolpyruvate carboxykinase (ATP) (536 aa).

3 residues coordinate substrate: arginine 61, tyrosine 195, and lysine 201. ATP-binding positions include lysine 201, histidine 220, and glycine 236–threonine 244. 2 residues coordinate Mn(2+): lysine 201 and histidine 220. Aspartate 257 serves as a coordination point for Mn(2+). Glutamate 285, arginine 323, and threonine 448 together coordinate ATP. Residue arginine 323 participates in substrate binding.

The protein belongs to the phosphoenolpyruvate carboxykinase (ATP) family. It depends on Mn(2+) as a cofactor.

It localises to the cytoplasm. It catalyses the reaction oxaloacetate + ATP = phosphoenolpyruvate + ADP + CO2. It functions in the pathway carbohydrate biosynthesis; gluconeogenesis. In terms of biological role, involved in the gluconeogenesis. Catalyzes the conversion of oxaloacetate (OAA) to phosphoenolpyruvate (PEP) through direct phosphoryl transfer between the nucleoside triphosphate and OAA. In Methylobacterium nodulans (strain LMG 21967 / CNCM I-2342 / ORS 2060), this protein is Phosphoenolpyruvate carboxykinase (ATP).